Reading from the N-terminus, the 208-residue chain is Glutathione S-transferase 2 (208 aa).

Residues 1 to 78 (MSYKLTYFSI…HLARKYNLNG (78 aa)) form the GST N-terminal domain. Glutathione is bound by residues Tyr7, Lys42, 49–50 (QL), and 62–63 (QS). A GST C-terminal domain is found at 80–200 (NEMETTYIDM…YCEKRDAAKV (121 aa)).

This sequence belongs to the GST superfamily. Pi family. In terms of assembly, homodimer. In terms of tissue distribution, hypodermis, wall of the seminal receptacle and spermatozoa of adult worms.

The enzyme catalyses RX + glutathione = an S-substituted glutathione + a halide anion + H(+). Its function is as follows. Appears to play a central role in the parasite detoxification system. The sequence is that of Glutathione S-transferase 2 (GST2) from Onchocerca volvulus.